The chain runs to 382 residues: Nonsense-mediated mRNA decay factor SMG9 (382 aa).

The segment at 1-66 is disordered; it reads MKKVEILKTP…PDSSVSKSSG (66 aa).

The protein belongs to the SMG9 family.

Functionally, involved in nonsense-mediated decay (NMD) of mRNAs containing premature stop codons. Probable component of kinase complex containing smg-1 and recruited to stalled ribosomes. This Caenorhabditis briggsae protein is Nonsense-mediated mRNA decay factor SMG9 (smg-9).